A 393-amino-acid chain; its full sequence is Lipid-A-disaccharide synthase (393 aa).

The protein belongs to the LpxB family.

The enzyme catalyses a lipid X + a UDP-2-N,3-O-bis[(3R)-3-hydroxyacyl]-alpha-D-glucosamine = a lipid A disaccharide + UDP + H(+). It participates in bacterial outer membrane biogenesis; LPS lipid A biosynthesis. In terms of biological role, condensation of UDP-2,3-diacylglucosamine and 2,3-diacylglucosamine-1-phosphate to form lipid A disaccharide, a precursor of lipid A, a phosphorylated glycolipid that anchors the lipopolysaccharide to the outer membrane of the cell. The protein is Lipid-A-disaccharide synthase of Granulibacter bethesdensis (strain ATCC BAA-1260 / CGDNIH1).